The chain runs to 601 residues: MEGADLLTAGVLFLFAAVAAVPLAARLGIGAVLGYLLAGIAIGPWGLGFISDVDEILHFSELGVVFLMFIIGLELNPSRLWQLRRSIFGVGAAQVLLSAAVLAGLLMLADFLWQAAVVGGIGLAMSSTAMALQLMREKGMNRSESGQLGFSVLLFQDLAVIPALALVPLLAGSADEHFDWFKVAMKVLAFAVMLIGGRYLLRPVFRFIAASGVREVFTAATLLLVLSAALFMDALGLSMALGTFIAGVLLAESEYRHELENAIDPFKGLLLGLFFISVGMSLNLGVLYTHLLWVAASVVILVVIKMLTLYLLARLYGIRSSERMQFASVLSQGGEFAFVLFSTASSQRLFQGDQMALLLVTVTLSMMTTPLLMKGIDKWLSRRLNGPEENDEKPWVEDDKPQVIVVGFGRFGQVIARLLMANKMRITVLERDIGAVNLMRKYGYKVYYGDATQVELLRSAGAEAAESIVITCNEPEDTMKLVALCQQHFPHLHILARARGRVEAHELLQAGVTQFSRETFSSALELGRKTLVSLGMHPHQAQRAQLHFRRLDMRMLRGLIPEHSDMVQISRAREARRELEEIFQREMQQERRQLDGWDEFE.

The next 13 membrane-spanning stretches (helical) occupy residues 4-24 (ADLL…VPLA), 29-49 (IGAV…GLGF), 55-75 (EILH…GLEL), 87-107 (IFGV…GLLM), 111-131 (FLWQ…TAMA), 152-172 (VLLF…LLAG), 177-197 (HFDW…LIGG), 207-227 (FIAA…LVLS), 230-250 (LFMD…GVLL), 262-282 (AIDP…GMSL), 284-304 (LGVL…LVVI), 324-344 (MQFA…FSTA), and 356-376 (ALLL…MKGI). The region spanning 400–519 (KPQVIVVGFG…AGVTQFSRET (120 aa)) is the RCK N-terminal domain.

The protein belongs to the monovalent cation:proton antiporter 2 (CPA2) transporter (TC 2.A.37) family. KefB subfamily. As to quaternary structure, interacts with the regulatory subunit KefG.

It is found in the cell inner membrane. Pore-forming subunit of a potassium efflux system that confers protection against electrophiles. Catalyzes K(+)/H(+) antiport. The polypeptide is Glutathione-regulated potassium-efflux system protein KefB (Salmonella paratyphi A (strain ATCC 9150 / SARB42)).